We begin with the raw amino-acid sequence, 675 residues long: Rho GTPase-activating protein 40 (675 aa).

Disordered regions lie at residues 95-118 (RDELREEDSGGNEGQLPEEGEAES) and 187-218 (KMSSENGDSGMKGAQLSSGASKFPPAAEPGGL). Acidic residues predominate over residues 103–116 (SGGNEGQLPEEGEA). The Rho-GAP domain occupies 323-522 (VPLDSLLEAD…IMVHYQDLLW (200 aa)).

Its function is as follows. GTPase activator for the Rho-type GTPases by converting them to an inactive GDP-bound state. This chain is Rho GTPase-activating protein 40, found in Homo sapiens (Human).